The following is a 171-amino-acid chain: Lipoprotein signal peptidase (171 aa).

2 helical membrane-spanning segments follow: residues Tyr-67–Ser-87 and Thr-88–Tyr-108. Active-site residues include Asp-118 and Asp-136. Residues Phe-127–Leu-147 form a helical membrane-spanning segment.

This sequence belongs to the peptidase A8 family.

It is found in the cell inner membrane. The enzyme catalyses Release of signal peptides from bacterial membrane prolipoproteins. Hydrolyzes -Xaa-Yaa-Zaa-|-(S,diacylglyceryl)Cys-, in which Xaa is hydrophobic (preferably Leu), and Yaa (Ala or Ser) and Zaa (Gly or Ala) have small, neutral side chains.. The protein operates within protein modification; lipoprotein biosynthesis (signal peptide cleavage). Its function is as follows. This protein specifically catalyzes the removal of signal peptides from prolipoproteins. The polypeptide is Lipoprotein signal peptidase (Methylocella silvestris (strain DSM 15510 / CIP 108128 / LMG 27833 / NCIMB 13906 / BL2)).